Consider the following 116-residue polypeptide: Small ribosomal subunit protein uS13m (116 aa).

Belongs to the universal ribosomal protein uS13 family. Part of the small ribosomal subunit.

Its subcellular location is the mitochondrion. Located at the top of the head of the small subunit, it contacts several helices of the 18S rRNA. The polypeptide is Small ribosomal subunit protein uS13m (RPS13) (Nicotiana tabacum (Common tobacco)).